A 485-amino-acid chain; its full sequence is Bcl-2-like protein 13 (485 aa).

A BH4 motif is present at residues 14–30 (ETKYVVLSYLGLLSQEK). Ser38 is subject to Phosphoserine. A BH3 motif is present at residues 100–116 (MEDCLAHLGEKVSQELK). Residues 147–157 (ASGWNKILVPL) carry the BH1 motif. Positions 193–206 (YIIQQGGWGTVFSL) match the BH2 motif. The segment at 218–248 (AEDSNDIYILPSDNSGQVSPPESPTVTTSWQ) is disordered. The span at 229 to 248 (SDNSGQVSPPESPTVTTSWQ) shows a compositional bias: polar residues. One copy of the A repeat lies at 246 to 256 (SWQSESLPVSL). Phosphoserine occurs at positions 259, 261, 303, 326, 371, 375, 410, 420, 426, 429, and 444. The stretch at 261 to 271 (SWHTESLPVSL) is one A; approximate repeat. The segment at 418–451 (EESLVEELSPASEKKPVPPSEGKSRLSPAGEMKP) is disordered. A B repeat occupies 425 to 441 (LSPASEKKPVPPSEGKS). Residues 443–459 (LSPAGEMKPMPLSEGKS) form a B; approximate repeat. A helical membrane pass occupies residues 460–480 (ILLFGGAAAVAILAVAIGVAL).

Belongs to the Bcl-2 family. In terms of assembly, monomer. In terms of tissue distribution, ubiquitous, with the highest levels of expression in heart, placenta and pancreas.

The protein resides in the mitochondrion membrane. Its subcellular location is the nucleus. May promote the activation of caspase-3 and apoptosis. The chain is Bcl-2-like protein 13 (BCL2L13) from Homo sapiens (Human).